Here is a 428-residue protein sequence, read N- to C-terminus: Histidine--tRNA ligase (428 aa).

The protein belongs to the class-II aminoacyl-tRNA synthetase family. Homodimer.

The protein resides in the cytoplasm. It carries out the reaction tRNA(His) + L-histidine + ATP = L-histidyl-tRNA(His) + AMP + diphosphate + H(+). In Lactobacillus gasseri (strain ATCC 33323 / DSM 20243 / BCRC 14619 / CIP 102991 / JCM 1131 / KCTC 3163 / NCIMB 11718 / NCTC 13722 / AM63), this protein is Histidine--tRNA ligase.